Here is a 235-residue protein sequence, read N- to C-terminus: MFKLTEKGEKIQEMFDTIAPRYDFLNRVLSFGIDRSWRRFAVKKIKYAPNGRILDVATGTGDVALEIAARTPSSVSITGIDFSGEMVELGKQKVAASSYAGRINMQVAPCEDIPFADDSFDSITIAFGIRNVVDRSQGLKEMYRVLKPGGRVVILEFSTPRFVLFKHLYHFYFLKVLPVIGGLFSKFSAYKYLPDSVIEFPSQDQFKATMAGVGFKNTQHHDLTLGIATVYTGEK.

S-adenosyl-L-methionine-binding residues include Thr60 and Asp81.

It belongs to the class I-like SAM-binding methyltransferase superfamily. MenG/UbiE family.

The catalysed reaction is a 2-demethylmenaquinol + S-adenosyl-L-methionine = a menaquinol + S-adenosyl-L-homocysteine + H(+). It catalyses the reaction a 2-methoxy-6-(all-trans-polyprenyl)benzene-1,4-diol + S-adenosyl-L-methionine = a 5-methoxy-2-methyl-3-(all-trans-polyprenyl)benzene-1,4-diol + S-adenosyl-L-homocysteine + H(+). Its pathway is quinol/quinone metabolism; menaquinone biosynthesis; menaquinol from 1,4-dihydroxy-2-naphthoate: step 2/2. It functions in the pathway cofactor biosynthesis; ubiquinone biosynthesis. In terms of biological role, methyltransferase required for the conversion of demethylmenaquinol (DMKH2) to menaquinol (MKH2) and the conversion of 2-polyprenyl-6-methoxy-1,4-benzoquinol (DDMQH2) to 2-polyprenyl-3-methyl-6-methoxy-1,4-benzoquinol (DMQH2). This is Ubiquinone/menaquinone biosynthesis C-methyltransferase UbiE from Geotalea daltonii (strain DSM 22248 / JCM 15807 / FRC-32) (Geobacter daltonii).